The chain runs to 26 residues: Alpha-amylase inhibitor 1 (26 aa).

Belongs to the protease inhibitor I6 (cereal trypsin/alpha-amylase inhibitor) family.

It localises to the secreted. In terms of biological role, alpha-amylase inhibitor. This chain is Alpha-amylase inhibitor 1, found in Saussurea costus (Costus).